The chain runs to 638 residues: MLPRKRPRSGRSRLQFLLLFLTLGCVLMMVILLHPPPPTLHQAVTAQASKHSPDTGYRLDFGDSQEWVLEAETEGDEYSLLDGLPSFISLQEDQLLVAVASPRARRSQSQGRRQGSYQFIKHRSRRWDEEALEKDWRTEEDGEESEEVLTPLGPDSDGLNKPLSARLPLRRVLPEVRHPLCLQQHPTSGLPTASVILCFHDEAWPTLLRTVHSILDTAPRALLQEIILVDDLSQQELLKSALSEYVARLEAVKLLRSNRRLGTIGARMLGATRATGDVLVFMDAHCECHPGWLEPLLSRIADDRSRVVSPVIDVIDWKTLQYSASKLHRGTLDWKLDFRWKPLGEQEQKALPSPISPVRSPVVPREVVAVDRHYFQNTGAYDPLLSLGDSENLEMSFKAWLCGGSVEILPCSRVGHIYRSQDASSRPDPEVALKNKIIIAETWLSSFKETFYRHIPEAFTLSKVAKPDCTERLKLQRRLGCRTFHWFLANVYPELYPSDHRPRFSGKLHNTGFGLCADCQADGDILGCPMTLAPCSNNRQQQNLEHTGRKEILFGGPQRLCFDVRGGRVILQNCTEEGPAIHQQHWDFQEDGMIIHVLSGKCMEAGVQPSNKDLYLRQCDGKTSQLWRFDQIHPVDER.

Residues 1–12 are Cytoplasmic-facing; the sequence is MLPRKRPRSGRS. A helical; Signal-anchor for type II membrane protein transmembrane segment spans residues 13–35; it reads RLQFLLLFLTLGCVLMMVILLHP. The Lumenal portion of the chain corresponds to 36-638; sequence PPPTLHQAVT…FDQIHPVDER (603 aa). Positions 134–157 are disordered; the sequence is KDWRTEEDGEESEEVLTPLGPDSD. 5 disulfides stabilise this stretch: Cys181-Cys411, Cys402-Cys481, Cys516-Cys535, Cys561-Cys574, and Cys602-Cys619. Residues 190-299 form a catalytic subdomain A region; the sequence is LPTASVILCF…PGWLEPLLSR (110 aa). Residues Asp231 and Arg260 each contribute to the substrate site. Mn(2+) contacts are provided by Asp283, His285, and His416. A catalytic subdomain B region spans residues 357-419; the sequence is PVRSPVVPRE…PCSRVGHIYR (63 aa). Arg419 serves as a coordination point for substrate. Residues 503–630 form the Ricin B-type lectin domain; sequence RFSGKLHNTG…GKTSQLWRFD (128 aa). An N-linked (GlcNAc...) asparagine glycan is attached at Asn573.

The protein belongs to the glycosyltransferase 2 family. GalNAc-T subfamily. The cofactor is Mn(2+). In terms of tissue distribution, specifically expressed in testis.

It is found in the golgi apparatus membrane. It catalyses the reaction L-seryl-[protein] + UDP-N-acetyl-alpha-D-galactosamine = a 3-O-[N-acetyl-alpha-D-galactosaminyl]-L-seryl-[protein] + UDP + H(+). The catalysed reaction is L-threonyl-[protein] + UDP-N-acetyl-alpha-D-galactosamine = a 3-O-[N-acetyl-alpha-D-galactosaminyl]-L-threonyl-[protein] + UDP + H(+). The protein operates within protein modification; protein glycosylation. Its function is as follows. Catalyzes the initial reaction in O-linked oligosaccharide biosynthesis, the transfer of an N-acetyl-D-galactosamine residue to a serine or threonine residue on the protein receptor. Although it displays a much weaker activity toward all substrates tested compared to GALNT2, it is able to transfer up to seven GalNAc residues to the Muc5AC peptide, suggesting that it can fill vicinal Thr/Ser residues in cooperation with other GALNT proteins. Prefers Muc1a as substrate. The chain is Polypeptide N-acetylgalactosaminyltransferase 15 (Galnt15) from Mus musculus (Mouse).